We begin with the raw amino-acid sequence, 636 residues long: 1-phosphatidylinositol 4,5-bisphosphate phosphodiesterase zeta-1 (636 aa).

Residues Cys35–Arg70 enclose the EF-hand domain. The 145-residue stretch at Gln155–Lys299 folds into the PI-PLC X-box domain. Residues His170 and His215 contribute to the active site. The interval Lys311–Arg338 is disordered. Residues Gln318–Ile345 adopt a coiled-coil conformation. Acidic residues predominate over residues Glu321–Glu336. In terms of domain architecture, PI-PLC Y-box spans Leu375 to Arg491. The C2 domain occupies Arg491–Ser617.

As to quaternary structure, interacts via its C2 domain with PtdIns(3)P and, to a lesser extent, PtdIns(5)P in vitro. Ca(2+) serves as cofactor. As to expression, expressed specifically in testis.

It localises to the nucleus. It is found in the cytoplasm. Its subcellular location is the perinuclear region. It catalyses the reaction a 1,2-diacyl-sn-glycero-3-phospho-(1D-myo-inositol-4,5-bisphosphate) + H2O = 1D-myo-inositol 1,4,5-trisphosphate + a 1,2-diacyl-sn-glycerol + H(+). Its function is as follows. The production of the second messenger molecules diacylglycerol (DAG) and inositol 1,4,5-trisphosphate (IP3) is mediated by activated phosphatidylinositol-specific phospholipase C enzymes. In vitro, hydrolyzes PtdIns(4,5)P2 in a Ca(2+)-dependent manner. Triggers intracellular Ca(2+) oscillations in oocytes solely during M phase and is involved in inducing oocyte activation and initiating embryonic development up to the blastocyst stage. Is therefore a strong candidate for the egg-activating soluble sperm factor that is transferred from the sperm into the egg cytoplasm following gamete membrane fusion. May exert an inhibitory effect on phospholipase-C-coupled processes that depend on calcium ions and protein kinase C, including CFTR trafficking and function. This Sus scrofa (Pig) protein is 1-phosphatidylinositol 4,5-bisphosphate phosphodiesterase zeta-1.